A 331-amino-acid polypeptide reads, in one-letter code: Major outer membrane protein P.IB (331 aa).

Positions 1–19 (MKKSLIALTLAALPVAAMA) are cleaved as a signal peptide.

It belongs to the Gram-negative porin family. As to quaternary structure, homotrimer.

The protein resides in the cell outer membrane. Functionally, serves as a slightly cation selective porin. This is Major outer membrane protein P.IB (porB) from Neisseria meningitidis serogroup B.